Reading from the N-terminus, the 75-residue chain is ATP synthase subunit c (75 aa).

A run of 2 helical transmembrane segments spans residues Leu12 to Val32 and Leu49 to Gly69.

This sequence belongs to the ATPase C chain family. F-type ATPases have 2 components, F(1) - the catalytic core - and F(0) - the membrane proton channel. F(1) has five subunits: alpha(3), beta(3), gamma(1), delta(1), epsilon(1). F(0) has three main subunits: a(1), b(2) and c(10-14). The alpha and beta chains form an alternating ring which encloses part of the gamma chain. F(1) is attached to F(0) by a central stalk formed by the gamma and epsilon chains, while a peripheral stalk is formed by the delta and b chains.

The protein localises to the cell membrane. Functionally, f(1)F(0) ATP synthase produces ATP from ADP in the presence of a proton or sodium gradient. F-type ATPases consist of two structural domains, F(1) containing the extramembraneous catalytic core and F(0) containing the membrane proton channel, linked together by a central stalk and a peripheral stalk. During catalysis, ATP synthesis in the catalytic domain of F(1) is coupled via a rotary mechanism of the central stalk subunits to proton translocation. In terms of biological role, key component of the F(0) channel; it plays a direct role in translocation across the membrane. A homomeric c-ring of between 10-14 subunits forms the central stalk rotor element with the F(1) delta and epsilon subunits. This chain is ATP synthase subunit c, found in Tropheryma whipplei (strain TW08/27) (Whipple's bacillus).